The sequence spans 266 residues: Methionine aminopeptidase (266 aa).

H80 contacts substrate. A divalent metal cation contacts are provided by D98, D109, and H172. A substrate-binding site is contributed by H179. The a divalent metal cation site is built by E206 and E237.

Belongs to the peptidase M24A family. Methionine aminopeptidase type 1 subfamily. In terms of assembly, monomer. Requires Co(2+) as cofactor. It depends on Zn(2+) as a cofactor. Mn(2+) serves as cofactor. Fe(2+) is required as a cofactor.

It catalyses the reaction Release of N-terminal amino acids, preferentially methionine, from peptides and arylamides.. Functionally, removes the N-terminal methionine from nascent proteins. The N-terminal methionine is often cleaved when the second residue in the primary sequence is small and uncharged (Met-Ala-, Cys, Gly, Pro, Ser, Thr, or Val). Requires deformylation of the N(alpha)-formylated initiator methionine before it can be hydrolyzed. The chain is Methionine aminopeptidase from Buchnera aphidicola subsp. Baizongia pistaciae (strain Bp).